An 88-amino-acid chain; its full sequence is Large ribosomal subunit protein uL23c (88 aa).

Belongs to the universal ribosomal protein uL23 family. As to quaternary structure, part of the 50S ribosomal subunit.

Its subcellular location is the plastid. The protein resides in the chloroplast. Binds to 23S rRNA. The chain is Large ribosomal subunit protein uL23c (rpl23) from Spirogyra maxima (Green alga).